Consider the following 494-residue polypeptide: MLASGMLLVALLVCLTVMVLMSVWQQRKSKGKLPPGPTPLPFIGNYLQLNTEQMYNSLMKISERYGPVFTIHLGPRRVVVLCGHDAVREALVDQAEEFSGRGEQATFDWVFKGYGVVFSNGERAKQLRRFSIATLRDFGVGKRGIEERIQEEAGFLIDALRGTGGANIDPTFFLSRTVSNVISSIVFGDRFDYKDKEFLSLLRMMLGIFQFTSTSTGQLYEMFSSVMKHLPGPQQQAFQLLQGLEDFIAKKVEHNQRTLDPNSPRDFIDSFLIRMQEEEKNPNTEFYLKNLVMTTLNLFIGGTETVSTTLRYGFLLLMKHPEVEAKVHEEIDRVIGKNRQPKFEDRAKMPYMEAVIHEIQRFGDVIPMSLARRVKKDTKFRDFFLPKGTEVYPMLGSVLRDPSFFSNPQDFNPQHFLNEKGQFKKSDAFVPFSIGKRNCFGEGLARMELFLFFTTVMQNFRLKSSQSPKDIDVSPKHVGFATIPRNYTMSFLPR.

The substrate site is built by F107 and N297. A heme-binding site is contributed by C439.

The protein belongs to the cytochrome P450 family. The cofactor is heme. As to expression, liver.

The protein localises to the endoplasmic reticulum membrane. It is found in the microsome membrane. It catalyses the reaction 1,4-cineole + reduced [NADPH--hemoprotein reductase] + O2 = 2-exo-hydroxy-1,4-cineole + oxidized [NADPH--hemoprotein reductase] + H2O + H(+). Exhibits a high coumarin 7-hydroxylase activity. Can act in the hydroxylation of the anti-cancer drugs cyclophosphamide and ifosphamide. Competent in the metabolic activation of aflatoxin B1. Constitutes the major nicotine C-oxidase. Acts as a 1,4-cineole 2-exo-monooxygenase. Possesses low phenacetin O-deethylation activity. This is Cytochrome P450 2A6 (CYP2A6) from Homo sapiens (Human).